The sequence spans 119 residues: Chorion class CA protein ERA.5 (119 aa).

The first 21 residues, 1–21, serve as a signal peptide directing secretion; that stretch reads MSTYTFVLFCLQICLIQNVYS. Residues 22–55 form a left arm region; that stretch reads QCLGRVGPGGPPVGPYGGPLGGPGYGPVGYGGCG. A central domain region spans residues 56-103; the sequence is GYGGSGIGNVAVAGELPVAGSSAVMGQVPVIGAVEFAGPACAVGSVSI. Positions 104–119 are right arm; it reads SGACGPTCGCGGSPYY.

This sequence belongs to the chorion protein family.

In terms of biological role, this protein is one of many from the eggshell of the silk moth. The protein is Chorion class CA protein ERA.5 (ERA.5) of Bombyx mori (Silk moth).